The sequence spans 80 residues: Small ribosomal subunit protein bS18 (80 aa).

It belongs to the bacterial ribosomal protein bS18 family. As to quaternary structure, part of the 30S ribosomal subunit. Forms a tight heterodimer with protein bS6.

Binds as a heterodimer with protein bS6 to the central domain of the 16S rRNA, where it helps stabilize the platform of the 30S subunit. The chain is Small ribosomal subunit protein bS18 from Staphylococcus saprophyticus subsp. saprophyticus (strain ATCC 15305 / DSM 20229 / NCIMB 8711 / NCTC 7292 / S-41).